The chain runs to 133 residues: uncharacterized protein (133 aa).

A helical membrane pass occupies residues 36 to 56; the sequence is LPMLIALACIFLLLATCLLFM. Positions 105 to 133 are disordered; sequence HGRPTVPRQPLPGPEDNRSHCDYMESTKM. Positions 119-133 are enriched in basic and acidic residues; the sequence is EDNRSHCDYMESTKM.

Its subcellular location is the membrane. This is an uncharacterized protein from Homo sapiens (Human).